Reading from the N-terminus, the 233-residue chain is Probable O-methyltransferase Rv1703c (233 aa).

S-adenosyl-L-methionine is bound by residues Val-55, Glu-77, 79–80 (GT), and Glu-102. A divalent metal cation is bound at residue Asp-157. Asp-159 is a binding site for S-adenosyl-L-methionine. Positions 185 and 186 each coordinate a divalent metal cation.

This sequence belongs to the class I-like SAM-binding methyltransferase superfamily. Cation-dependent O-methyltransferase family.

In terms of biological role, specifically methylates an O atom of its substrate. The sequence is that of Probable O-methyltransferase Rv1703c from Mycobacterium tuberculosis (strain ATCC 25618 / H37Rv).